A 468-amino-acid polypeptide reads, in one-letter code: Glutamine synthetase (468 aa).

The GS beta-grasp domain maps to 11–96 (HDVKWIDLRF…LVCDIIEPST (86 aa)). Residues 104–468 (PRAIAHRAEE…PLEYELYYSC (365 aa)) enclose the GS catalytic domain. Mg(2+)-binding residues include Glu129 and Glu131. Position 207 (Glu207) interacts with ATP. Glu212 and Glu220 together coordinate Mg(2+). L-glutamate contacts are provided by residues 264–265 (NG) and Gly265. His269 is a binding site for Mg(2+). Residues 271-273 (HMS) and Ser273 each bind ATP. Residues Arg321, Glu327, and Arg339 each contribute to the L-glutamate site. Residues Arg339, Arg344, and Arg352 each contribute to the ATP site. Mg(2+) is bound at residue Glu357. Arg359 contacts L-glutamate. Position 397 is an O-AMP-tyrosine (Tyr397).

It belongs to the glutamine synthetase family. As to quaternary structure, oligomer of 12 subunits arranged in the form of two hexagons. Requires Mg(2+) as cofactor. It depends on Mn(2+) as a cofactor.

It carries out the reaction L-glutamate + NH4(+) + ATP = L-glutamine + ADP + phosphate + H(+). With respect to regulation, when cellular nitrogen levels are high, the C-terminal adenylyl transferase (AT) of GlnE inhibits GlnA by covalent transfer of an adenylyl group from ATP to Tyr-397. Conversely, when nitrogen levels are low, the N-terminal adenylyl removase (AR) of GlnE activates GlnA by removing the adenylyl group by phosphorolysis. The fully adenylated enzyme complex is inactive. Functionally, catalyzes the formation of glutamine from glutamate and ammonia. In vitro, can also use hydroxylamine, methylamine and ethylamine, with 32%, 7% and 1% activity compared to ammonia, respectively. This Pseudomonas taetrolens protein is Glutamine synthetase.